Here is a 201-residue protein sequence, read N- to C-terminus: 3-isopropylmalate dehydratase small subunit (201 aa).

The protein belongs to the LeuD family. LeuD type 1 subfamily. As to quaternary structure, heterodimer of LeuC and LeuD.

The catalysed reaction is (2R,3S)-3-isopropylmalate = (2S)-2-isopropylmalate. It participates in amino-acid biosynthesis; L-leucine biosynthesis; L-leucine from 3-methyl-2-oxobutanoate: step 2/4. Catalyzes the isomerization between 2-isopropylmalate and 3-isopropylmalate, via the formation of 2-isopropylmaleate. This Agrobacterium fabrum (strain C58 / ATCC 33970) (Agrobacterium tumefaciens (strain C58)) protein is 3-isopropylmalate dehydratase small subunit.